Consider the following 147-residue polypeptide: Hemoglobin subunit beta-1 (147 aa).

Val-2 carries the post-translational modification N-acetylvaline. Positions 3–147 (HLTDAEKAAV…VASALAHKYH (145 aa)) constitute a Globin domain. Lys-18 carries the post-translational modification N6-succinyllysine. Residues Ser-45, Ser-51, and Ser-53 each carry the phosphoserine modification. Residue Lys-60 is modified to N6-succinyllysine. Residues His-64 and His-93 each contribute to the heme b site. Arg-105 bears the Asymmetric dimethylarginine mark. Thr-124 carries the phosphothreonine modification.

This sequence belongs to the globin family. Heterotetramer of two alpha chains and two beta chains. Red blood cells.

Functionally, involved in oxygen transport from the lung to the various peripheral tissues. The protein is Hemoglobin subunit beta-1 (Hbb) of Rattus norvegicus (Rat).